Reading from the N-terminus, the 450-residue chain is Tryptophan dimethylallyltransferase 2 (450 aa).

L-tryptophan is bound by residues 80–81 and glutamate 89; that span reads IL. Substrate-binding residues include arginine 100, lysine 186, and tyrosine 188. The L-tryptophan site is built by tyrosine 190 and arginine 251. Residues arginine 264, lysine 266, tyrosine 268, glutamine 350, tyrosine 352, tyrosine 416, and tyrosine 420 each coordinate substrate.

It belongs to the tryptophan dimethylallyltransferase family. As to quaternary structure, homodimer.

The enzyme catalyses L-tryptophan + dimethylallyl diphosphate = 4-(3-methylbut-2-enyl)-L-tryptophan + diphosphate. Its pathway is alkaloid biosynthesis; ergot alkaloid biosynthesis. In terms of biological role, catalyzes the first step of ergot alkaloid biosynthesis. Ergot alkaloids, which are produced by endophyte fungi, can enhance plant host fitness, but also cause livestock toxicosis to host plants. The chain is Tryptophan dimethylallyltransferase 2 (dmaW2) from Epichloe coenophiala (Tall fescue endophyte fungus).